Reading from the N-terminus, the 326-residue chain is Ribosomal RNA small subunit methyltransferase H (326 aa).

Residues 35–37 (GGY), Asp-53, Phe-80, Asp-101, and Gln-108 each bind S-adenosyl-L-methionine. The interval 260–306 (EGVSRHLPQASNAGAGNPPPSFQAVSRRAVKPLDAETRVNPRSRSAR) is disordered.

It belongs to the methyltransferase superfamily. RsmH family.

The protein resides in the cytoplasm. The enzyme catalyses cytidine(1402) in 16S rRNA + S-adenosyl-L-methionine = N(4)-methylcytidine(1402) in 16S rRNA + S-adenosyl-L-homocysteine + H(+). Specifically methylates the N4 position of cytidine in position 1402 (C1402) of 16S rRNA. The protein is Ribosomal RNA small subunit methyltransferase H of Rhodospirillum rubrum (strain ATCC 11170 / ATH 1.1.1 / DSM 467 / LMG 4362 / NCIMB 8255 / S1).